A 125-amino-acid polypeptide reads, in one-letter code: Cu-Zn superoxide dismutase-like protein (125 aa).

Cys-52 and Cys-102 are disulfide-bonded.

This sequence belongs to the Cu-Zn superoxide dismutase family.

Its subcellular location is the host cytoplasm. Functionally, virion protein with no enzymatic activity. In Mus musculus (Mouse), this protein is Cu-Zn superoxide dismutase-like protein.